A 384-amino-acid polypeptide reads, in one-letter code: Glycerol 3-phosphate oxidase (384 aa).

A signal peptide spans 1–17 (MQTIDVLIVGGGVIGTS). Residue isoleucine 14 coordinates FAD. A lipid anchor (N-palmitoyl cysteine) is attached at cysteine 18. Cysteine 18 carries S-diacylglycerol cysteine lipidation. FAD-binding positions include glutamate 33, 42-43 (TS), and 47-49 (SGV). Serine 47 and histidine 51 together coordinate sn-glycerol 3-phosphate. Histidine 51 serves as the catalytic Proton acceptor. Position 177 (valine 177) interacts with FAD. The sn-glycerol 3-phosphate site is built by lysine 258 and arginine 320. 346 to 347 (MK) is an FAD binding site. Serine 348 is a sn-glycerol 3-phosphate binding site. Threonine 352 serves as a coordination point for FAD.

As to quaternary structure, monomer. FAD serves as cofactor.

It localises to the cytoplasm. It is found in the cell membrane. It carries out the reaction sn-glycerol 3-phosphate + O2 = dihydroxyacetone phosphate + H2O2. Its pathway is polyol metabolism; glycerol degradation via glycerol kinase pathway; glycerone phosphate from sn-glycerol 3-phosphate (aerobic route): step 1/1. Catalyzes the oxidation of glycerol 3-phosphate to dihydroxyacetone phosphate (DHAP), with a reduction of O2 to H2O2. The formation of hydrogen peroxide by this enzyme is crucial for cytotoxic effects on host cells. Does not show any dehydrogenase activity with NAD(+). This chain is Glycerol 3-phosphate oxidase, found in Mycoplasma genitalium (strain ATCC 33530 / DSM 19775 / NCTC 10195 / G37) (Mycoplasmoides genitalium).